The chain runs to 251 residues: Small ribosomal subunit protein uS2 (251 aa).

S2 is subject to N-acetylserine. The disordered stretch occupies residues 209–251; sequence EIEQQTAEEAAQEAGEEEAKEEVTEEQTEAAEWAQENADNVEW. The span at 218 to 237 shows a compositional bias: acidic residues; sequence AAQEAGEEEAKEEVTEEQTE. The span at 238–251 shows a compositional bias: low complexity; that stretch reads AAEWAQENADNVEW.

Belongs to the universal ribosomal protein uS2 family. Component of the small ribosomal subunit. Mature ribosomes consist of a small (40S) and a large (60S) subunit. The 40S subunit contains about 33 different proteins and 1 molecule of RNA (18S). The 60S subunit contains about 49 different proteins and 3 molecules of RNA (25S, 5.8S and 5S). Interacts with RPS21.

The protein resides in the cytoplasm. Required for the assembly and/or stability of the 40S ribosomal subunit. Required for the processing of the 20S rRNA-precursor to mature 18S rRNA in a late step of the maturation of 40S ribosomal subunits. The chain is Small ribosomal subunit protein uS2 from Candida glabrata (strain ATCC 2001 / BCRC 20586 / JCM 3761 / NBRC 0622 / NRRL Y-65 / CBS 138) (Yeast).